The primary structure comprises 804 residues: Phenylalanine--tRNA ligase beta subunit (804 aa).

The tRNA-binding domain maps to R38–A148. Residues P401 to P476 form the B5 domain. Residues D454, D460, E463, and E464 each contribute to the Mg(2+) site. Residues S710–R803 enclose the FDX-ACB domain.

It belongs to the phenylalanyl-tRNA synthetase beta subunit family. Type 1 subfamily. As to quaternary structure, tetramer of two alpha and two beta subunits. Mg(2+) serves as cofactor.

The protein localises to the cytoplasm. It carries out the reaction tRNA(Phe) + L-phenylalanine + ATP = L-phenylalanyl-tRNA(Phe) + AMP + diphosphate + H(+). This chain is Phenylalanine--tRNA ligase beta subunit, found in Bartonella quintana (strain Toulouse) (Rochalimaea quintana).